A 292-amino-acid polypeptide reads, in one-letter code: Homoserine kinase (292 aa).

ATP is bound at residue 84–94; that stretch reads PLSRGLGSSSA.

This sequence belongs to the GHMP kinase family. Homoserine kinase subfamily.

It localises to the cytoplasm. It catalyses the reaction L-homoserine + ATP = O-phospho-L-homoserine + ADP + H(+). It functions in the pathway amino-acid biosynthesis; L-threonine biosynthesis; L-threonine from L-aspartate: step 4/5. In terms of biological role, catalyzes the ATP-dependent phosphorylation of L-homoserine to L-homoserine phosphate. This chain is Homoserine kinase, found in Campylobacter jejuni subsp. doylei (strain ATCC BAA-1458 / RM4099 / 269.97).